The following is a 305-amino-acid chain: Oxygen-dependent coproporphyrinogen-III oxidase (305 aa).

Ser-98 is a substrate binding site. Residues His-102 and His-112 each contribute to the a divalent metal cation site. Residue His-112 is the Proton donor of the active site. 114 to 116 (NVR) lines the substrate pocket. The a divalent metal cation site is built by His-151 and His-181. The important for dimerization stretch occupies residues 246 to 281 (YVEFNLVYDRGTLFGLQSGGRTESILMSMPPLARWE). 264–266 (GGR) lines the substrate pocket.

Belongs to the aerobic coproporphyrinogen-III oxidase family. In terms of assembly, homodimer. It depends on a divalent metal cation as a cofactor.

Its subcellular location is the cytoplasm. It carries out the reaction coproporphyrinogen III + O2 + 2 H(+) = protoporphyrinogen IX + 2 CO2 + 2 H2O. Its pathway is porphyrin-containing compound metabolism; protoporphyrin-IX biosynthesis; protoporphyrinogen-IX from coproporphyrinogen-III (O2 route): step 1/1. Functionally, involved in the heme biosynthesis. Catalyzes the aerobic oxidative decarboxylation of propionate groups of rings A and B of coproporphyrinogen-III to yield the vinyl groups in protoporphyrinogen-IX. This chain is Oxygen-dependent coproporphyrinogen-III oxidase, found in Vibrio campbellii (strain ATCC BAA-1116).